A 171-amino-acid polypeptide reads, in one-letter code: Ribosome maturation factor RimP (171 aa).

This sequence belongs to the RimP family.

The protein resides in the cytoplasm. Required for maturation of 30S ribosomal subunits. The polypeptide is Ribosome maturation factor RimP (Anaeromyxobacter dehalogenans (strain 2CP-1 / ATCC BAA-258)).